We begin with the raw amino-acid sequence, 540 residues long: Glucose-6-phosphate isomerase (540 aa).

The active-site Proton donor is E346. Residues H377 and K505 contribute to the active site.

This sequence belongs to the GPI family.

It is found in the cytoplasm. The catalysed reaction is alpha-D-glucose 6-phosphate = beta-D-fructose 6-phosphate. It participates in carbohydrate biosynthesis; gluconeogenesis. Its pathway is carbohydrate degradation; glycolysis; D-glyceraldehyde 3-phosphate and glycerone phosphate from D-glucose: step 2/4. Its function is as follows. Catalyzes the reversible isomerization of glucose-6-phosphate to fructose-6-phosphate. The chain is Glucose-6-phosphate isomerase from Francisella tularensis subsp. tularensis (strain WY96-3418).